We begin with the raw amino-acid sequence, 87 residues long: Small ribosomal subunit protein bS20 (87 aa).

Residues 1 to 26 form a disordered region; that stretch reads MANHKSAIKRHKQSQKRAARNRAAKT.

It belongs to the bacterial ribosomal protein bS20 family.

Binds directly to 16S ribosomal RNA. The chain is Small ribosomal subunit protein bS20 from Nitratidesulfovibrio vulgaris (strain DSM 19637 / Miyazaki F) (Desulfovibrio vulgaris).